The chain runs to 79 residues: Conotoxin Leo-O1 (79 aa).

Residues 1–22 (MKLTCMMLVAVLFLTAWTFVTA) form the signal peptide. Residues 23–51 (NVSRNGLENLFPEERHEMMNPEAAKLNNR) constitute a propeptide that is removed on maturation. 3 disulfide bridges follow: C53-C70, C60-C74, and C69-C78.

This sequence belongs to the conotoxin O1 superfamily. In terms of tissue distribution, expressed by the venom duct.

The protein resides in the secreted. The chain is Conotoxin Leo-O1 from Conus leopardus (Leopard cone).